The primary structure comprises 187 residues: Rusticyanin (187 aa).

The N-terminal stretch at 1–32 (MYTQNTMKKNWYVTVGAAAALAATVGMGTAMA) is a signal peptide. Residues 85–187 (SFEVHDKKNP…TGMFGKIIVK (103 aa)) enclose the Plastocyanin-like domain. His117, Cys170, His175, and Met180 together coordinate Cu cation.

As to quaternary structure, monomer. Cu cation serves as cofactor.

The protein localises to the periplasm. Its function is as follows. Electron carrier from cytochrome c552 to the A-type oxidase. This Acidithiobacillus ferridurans protein is Rusticyanin (rus).